The chain runs to 149 residues: Immunoglobulin kappa chain variable 6-17 (149 aa).

Positions 1–29 are cleaved as a signal peptide; the sequence is MHHTSMGIKMESQIQVFVFVFLWLSGVDG. Repeats lie at residues 26–35 and 38–47; these read GVDGDIVMTQ. Positions 42 to 64 are framework-1; the sequence is DIVMTQSHKFMSTSVGDRVSITC. A complementarity-determining-1 region spans residues 65-75; the sequence is KASQDVSTTVA. Residues 76-90 form a framework-2 region; that stretch reads WYQQKPGQSPKLLIY. Positions 91–97 are complementarity-determining-2; that stretch reads SASYRYT. Residues 98 to 129 form a framework-3 region; that stretch reads GVPDRFTGSGSGTDFTFTISSVQAEDLAVYYC. A complementarity-determining-3 region spans residues 130-138; it reads QQHYSTPPT. Residues 139–148 are framework-4; that stretch reads FGGGTKLEIK.

This chain is Immunoglobulin kappa chain variable 6-17, found in Mus musculus (Mouse).